The chain runs to 200 residues: Probable E3 ubiquitin-protein ligase ATL45 (200 aa).

A helical transmembrane segment spans residues 26-46 (MVVILSALLCALVCVAGLAAV). The RING-type; atypical zinc-finger motif lies at 113–155 (CAICITEFSEGEEIRILPLCSHAFHVACIDKWLTSRSSCPSCR).

It belongs to the RING-type zinc finger family. ATL subfamily. Interacts with BIK1.

It localises to the membrane. The enzyme catalyses S-ubiquitinyl-[E2 ubiquitin-conjugating enzyme]-L-cysteine + [acceptor protein]-L-lysine = [E2 ubiquitin-conjugating enzyme]-L-cysteine + N(6)-ubiquitinyl-[acceptor protein]-L-lysine.. It participates in protein modification; protein ubiquitination. Functionally, E3 ubiquitin-protein ligase that possess E3 ubiquitin ligase activity in vitro and mediates protein monoubiquitination. Triggers the monoubiquitination of phosphorylated BIK1 in response to pathogen-associated molecular pattern (PAMP) detection. May be involved in the early steps of the plant defense signaling pathway. The protein is Probable E3 ubiquitin-protein ligase ATL45 of Arabidopsis thaliana (Mouse-ear cress).